A 275-amino-acid chain; its full sequence is Phenylalanine-4-hydroxylase (275 aa).

Residues histidine 135, histidine 140, and glutamate 181 each contribute to the Fe cation site.

This sequence belongs to the biopterin-dependent aromatic amino acid hydroxylase family. It depends on Fe(2+) as a cofactor.

The catalysed reaction is (6R)-L-erythro-5,6,7,8-tetrahydrobiopterin + L-phenylalanine + O2 = (4aS,6R)-4a-hydroxy-L-erythro-5,6,7,8-tetrahydrobiopterin + L-tyrosine. The protein operates within amino-acid degradation; L-phenylalanine degradation; acetoacetate and fumarate from L-phenylalanine: step 1/6. This is Phenylalanine-4-hydroxylase (phhA) from Mesorhizobium japonicum (strain LMG 29417 / CECT 9101 / MAFF 303099) (Mesorhizobium loti (strain MAFF 303099)).